The following is a 1290-amino-acid chain: MNFLSFKTTKHYHIFRYVNIRNDYRLLMIMIIGTVATGLVPAITSILTGRVFDLLSVFVANGSHQGLYSQLVQRSMAVMALGAASVPVMWLSLTSWMHIGERQGFRIRSQILEAYLEEKPMEWYDNNEKLLGDFTQINRCVEELRSSSAEASAITFQNLVAICALLGTSFYYSWSLTLIILCSSPIITFFAVVFSRMIHVYSEKENSETSKAAQLLTWSMNAAQLVRLYCTQRLERKKFKEIILNCNTFFIKSCFFVAANAGILRFLTLTMFVQGFWFGSAMIKKGKLNINDVITCFHSCIMLGSTLNNTLHQIVVLQKGGVAMEKIMTLLKDGSKRNPLNKTVAHQFPLDYATSDLTFANVSFSYPSRPSEAVLKNVSLNFSAGQFTFIVGKSGSGKSTLSNLLLRFYDGYNGSISINGHNIQTIDQKLLIENITVVEQRCTLFNDTLRKNILLGSTDSVRNADCSTNENRHLIKDACQMALLDRFILDLPDGLETLIGTGGVTLSGGQQQRVAIARAFIRDTPILFLDEAVSALDIVHRNLLMKAIRHWRKGKTTIILTHELSQIESDDYLYLMKEGEVVESGTQSELLADPTTTFSTWYHLQNDYSDAKTIVDTETEEKSIHTVESFNSQLETPKLGSCLSNLGYDETDQLSFYEAIYQKRSNVRTRRVKVEEENIGYALKQQKNTESSTGPQLLSIIQIIKRMIKSIRYKKILILGLLCSLIAGATNPVFSYTFSFLLEGIVPSTDGKTGSSHYLAKWSLLVLGVAAADGIFNFAKGFLLDCCSEYWVMDLRNEVMEKLTRKNMDWFSGENNKASEISALVLNDLRDLRSLVSEFLSAMTSFVTVSTIGLIWALVSGWKLSLVCISMFPLIIIFSAIYGGILQKCETDYKTSVAQLENCLYQIVTNIKTIKCLQAEFHFQLTYHDLKIKMQQIASKRAIATGFGISMTNMIVMCIQAIIYYYGLKLVMIHEYTSKEMFTTFTLLLFTIMSCTSLVSQIPDISRGQRAASWIYRILDEKHNTLEVENNNARTVGIAGHTYHGKEKKPIVSIQNLTFAYPSAPTAFVYKNMNFDMFCGQTLGIIGESGTGKSTLVLLLTKLYNCEVGKIKIDGTDVNDWNLTSLRKEISVVEQKPLLFNGTIRDNLTYGLQDEILEIEMYDALKYVGIHDFVISSPQGLDTRIDTTLLSGGQAQRLCIARALLRKSKILILDECTSALDSVSSSIINEIVKKGPPALLTMVITHSEQMMRSCNSIAVLKDGKVVERGNFDTLYNNRGELFQIVSNQSS.

The Cytoplasmic segment spans residues 1 to 25 (MNFLSFKTTKHYHIFRYVNIRNDYR). The helical transmembrane segment at 26–46 (LLMIMIIGTVATGLVPAITSI) threads the bilayer. The 293-residue stretch at 27 to 319 (LMIMIIGTVA…TLHQIVVLQK (293 aa)) folds into the ABC transmembrane type-1 1 domain. Residues 47–75 (LTGRVFDLLSVFVANGSHQGLYSQLVQRS) are Extracellular-facing. Residue N61 is glycosylated (N-linked (GlcNAc...) asparagine). A helical membrane pass occupies residues 76 to 96 (MAVMALGAASVPVMWLSLTSW). The Cytoplasmic segment spans residues 97 to 150 (MHIGERQGFRIRSQILEAYLEEKPMEWYDNNEKLLGDFTQINRCVEELRSSSAE). Residues 151 to 171 (ASAITFQNLVAICALLGTSFY) form a helical membrane-spanning segment. The Extracellular segment spans residues 172 to 173 (YS). The helical transmembrane segment at 174-194 (WSLTLIILCSSPIITFFAVVF) threads the bilayer. The Cytoplasmic segment spans residues 195 to 262 (SRMIHVYSEK…SCFFVAANAG (68 aa)). The chain crosses the membrane as a helical span at residues 263 to 283 (ILRFLTLTMFVQGFWFGSAMI). Over 284–296 (KKGKLNINDVITC) the chain is Extracellular. The helical transmembrane segment at 297-317 (FHSCIMLGSTLNNTLHQIVVL) threads the bilayer. Topologically, residues 318–715 (QKGGVAMEKI…RMIKSIRYKK (398 aa)) are cytoplasmic. The ABC transporter 1 domain occupies 357 to 603 (LTFANVSFSY…PTTTFSTWYH (247 aa)). 392–399 (GKSGSGKS) is a binding site for ATP. The helical transmembrane segment at 716–736 (ILILGLLCSLIAGATNPVFSY) threads the bilayer. In terms of domain architecture, ABC transmembrane type-1 2 spans 717–1007 (LILGLLCSLI…LVSQIPDISR (291 aa)). The Extracellular portion of the chain corresponds to 737–763 (TFSFLLEGIVPSTDGKTGSSHYLAKWS). A helical transmembrane segment spans residues 764–784 (LLVLGVAAADGIFNFAKGFLL). Over 785–838 (DCCSEYWVMDLRNEVMEKLTRKNMDWFSGENNKASEISALVLNDLRDLRSLVSE) the chain is Cytoplasmic. A helical transmembrane segment spans residues 839-859 (FLSAMTSFVTVSTIGLIWALV). Topologically, residues 860–865 (SGWKLS) are extracellular. A helical membrane pass occupies residues 866-886 (LVCISMFPLIIIFSAIYGGIL). Residues 887–945 (QKCETDYKTSVAQLENCLYQIVTNIKTIKCLQAEFHFQLTYHDLKIKMQQIASKRAIAT) are Cytoplasmic-facing. The helical transmembrane segment at 946–966 (GFGISMTNMIVMCIQAIIYYY) threads the bilayer. Residues 967-981 (GLKLVMIHEYTSKEM) are Extracellular-facing. A helical membrane pass occupies residues 982–1002 (FTTFTLLLFTIMSCTSLVSQI). Over 1003 to 1290 (PDISRGQRAA…LFQIVSNQSS (288 aa)) the chain is Cytoplasmic. K1022 participates in a covalent cross-link: Glycyl lysine isopeptide (Lys-Gly) (interchain with G-Cter in ubiquitin). Residues 1052-1287 (VSIQNLTFAY…RGELFQIVSN (236 aa)) form the ABC transporter 2 domain. 1087–1094 (GESGTGKS) is an ATP binding site.

Belongs to the ABC transporter superfamily. Alpha-factor sex pheromone exporter (TC 3.A.1.206) family. Post-translationally, degraded via the ubiquitin system.

The protein resides in the membrane. It carries out the reaction an [alpha-factor](in) + ATP + H2O = an [alpha-factor](out) + ADP + phosphate + H(+). Functionally, STE6 is required in yeast MATA cells for production of A-factor pheromone. STE6 is involved in the transport of the farnesyl-derivation of the A-factor pheromone. This chain is Alpha-factor-transporting ATPase (STE6), found in Saccharomyces cerevisiae (strain ATCC 204508 / S288c) (Baker's yeast).